Consider the following 147-residue polypeptide: Hemoglobin subunit beta-M (147 aa).

V2 carries the post-translational modification N-acetylvaline. The Globin domain maps to 3 to 147 (HLTSEEKNCI…VAHALAHKYH (145 aa)). Position 13 is a phosphothreonine (T13). S45 carries the phosphoserine modification. K60 carries the N6-acetyllysine modification. H64 is a binding site for heme b. K83 carries the post-translational modification N6-acetyllysine. H93 provides a ligand contact to heme b. C94 bears the S-nitrosocysteine mark. K145 carries the post-translational modification N6-acetyllysine.

This sequence belongs to the globin family. Heterotetramer of two alpha chains and two beta chains. Red blood cells.

Its function is as follows. Involved in oxygen transport from the lung to the various peripheral tissues. The chain is Hemoglobin subunit beta-M (HBB) from Didelphis virginiana (North American opossum).